The primary structure comprises 175 residues: Large ribosomal subunit protein uL10 (175 aa).

The protein belongs to the universal ribosomal protein uL10 family. In terms of assembly, part of the ribosomal stalk of the 50S ribosomal subunit. The N-terminus interacts with L11 and the large rRNA to form the base of the stalk. The C-terminus forms an elongated spine to which L12 dimers bind in a sequential fashion forming a multimeric L10(L12)X complex.

Its function is as follows. Forms part of the ribosomal stalk, playing a central role in the interaction of the ribosome with GTP-bound translation factors. This chain is Large ribosomal subunit protein uL10, found in Cyanothece sp. (strain PCC 7425 / ATCC 29141).